Reading from the N-terminus, the 295-residue chain is ATP synthase gamma chain (295 aa).

It belongs to the ATPase gamma chain family. As to quaternary structure, F-type ATPases have 2 components, CF(1) - the catalytic core - and CF(0) - the membrane proton channel. CF(1) has five subunits: alpha(3), beta(3), gamma(1), delta(1), epsilon(1). CF(0) has three main subunits: a, b and c.

It localises to the cell inner membrane. Functionally, produces ATP from ADP in the presence of a proton gradient across the membrane. The gamma chain is believed to be important in regulating ATPase activity and the flow of protons through the CF(0) complex. The chain is ATP synthase gamma chain from Campylobacter curvus (strain 525.92).